The following is a 60-amino-acid chain: Ixodegrin-Ip (60 aa).

The first 21 residues, 1 to 21 (MNAAFIAALFILGALTLDAMA), serve as a signal peptide directing secretion. Residues 49–51 (RGD) carry the Cell attachment site motif.

It belongs to the ixodegrin family. Contains 3 disulfide bonds. In terms of tissue distribution, expressed in salivary glands.

The protein resides in the secreted. Tick salivary platelet aggregation inhibitor that plays an important part in the anti-hemostatic strategy of ticks. Inhibits platelet aggregation induced by ADP, thrombin and thromboxane A2 (TXA2). Blocks platelet adhesion to soluble collagen (most probably through the binding to alpha-2/beta-1 integrin (ITGA2/ITGB1)) and binds to purified glycoprotein IIb/IIIa (ITGA2B/ITGB3) in a dose-dependent manner. In vivo, reduces thrombus weight effectively in a rat arteriovenous shunt model and inhibits thrombosis in a carrageenan-induced mouse tail thrombosis model. The sequence is that of Ixodegrin-Ip from Ixodes pacificus (Western black-legged tick).